We begin with the raw amino-acid sequence, 160 residues long: Cytochrome b6-f complex subunit 4 (160 aa).

Transmembrane regions (helical) follow at residues 36-56 (LLYIFPVVIFGTIACNVGLAV), 95-115 (LLGVLLMAAVPAGLLTVPFLE), and 131-151 (TVFLFGTVVALWLGIGAALPI).

This sequence belongs to the cytochrome b family. PetD subfamily. In terms of assembly, the 4 large subunits of the cytochrome b6-f complex are cytochrome b6, subunit IV (17 kDa polypeptide, petD), cytochrome f and the Rieske protein, while the 4 small subunits are petG, petL, petM and petN. The complex functions as a dimer.

Its subcellular location is the plastid. The protein resides in the chloroplast thylakoid membrane. Functionally, component of the cytochrome b6-f complex, which mediates electron transfer between photosystem II (PSII) and photosystem I (PSI), cyclic electron flow around PSI, and state transitions. The chain is Cytochrome b6-f complex subunit 4 from Spirogyra maxima (Green alga).